Consider the following 378-residue polypeptide: Sterol 24-C-methyltransferase erg6 (378 aa).

This sequence belongs to the class I-like SAM-binding methyltransferase superfamily. Erg6/SMT family.

The protein localises to the nucleus. The protein resides in the endoplasmic reticulum. The enzyme catalyses zymosterol + S-adenosyl-L-methionine = fecosterol + S-adenosyl-L-homocysteine + H(+). It catalyses the reaction lanosterol + S-adenosyl-L-methionine = eburicol + S-adenosyl-L-homocysteine + H(+). It functions in the pathway steroid metabolism; ergosterol biosynthesis. Its function is as follows. Sterol 24-C-methyltransferase; part of the third module of ergosterol biosynthesis pathway that includes by the late steps of the pathway. Erg6 catalyzes the methyl transfer from S-adenosyl-methionine to the C-24 of zymosterol to form fecosterol. The third module or late pathway involves the ergosterol synthesis itself through consecutive reactions that mainly occur in the endoplasmic reticulum (ER) membrane. Firstly, the squalene synthase erg9 catalyzes the condensation of 2 farnesyl pyrophosphate moieties to form squalene, which is the precursor of all steroids. Secondly, squalene is converted into lanosterol by the consecutive action of the squalene epoxidase erg1 and the lanosterol synthase erg7. The lanosterol 14-alpha-demethylase erg11/cyp1 catalyzes C14-demethylation of lanosterol to produce 4,4'-dimethyl cholesta-8,14,24-triene-3-beta-ol. In the next steps, a complex process involving various demethylation, reduction and desaturation reactions catalyzed by the C-14 reductase erg24 and the C-4 demethylation complex erg25-erg26-erg27 leads to the production of zymosterol. Erg28 likely functions in the C-4 demethylation complex reaction by tethering erg26 and Erg27 to the endoplasmic reticulum or to facilitate interaction between these proteins. Then, the sterol 24-C-methyltransferase erg6 catalyzes the methyl transfer from S-adenosyl-methionine to the C-24 of zymosterol to form fecosterol. The C-8 sterol isomerase erg2 catalyzes the reaction which results in unsaturation at C-7 in the B ring of sterols and thus converts fecosterol to episterol. The sterol-C5-desaturases erg31 and erg32 then catalyze the introduction of a C-5 double bond in the B ring to produce 5-dehydroepisterol. The C-22 sterol desaturase erg5 further converts 5-dehydroepisterol into ergosta-5,7,22,24(28)-tetraen-3beta-ol by forming the C-22(23) double bond in the sterol side chain. Finally, ergosta-5,7,22,24(28)-tetraen-3beta-ol is substrate of the C-24(28) sterol reductase erg4 to produce ergosterol. In the genus Schizosaccharomyces, a second route exists between lanosterol and fecosterol, via the methylation of lanosterol to eburicol by erg6, followed by C14-demethylation by erg11/cyp1 and C4-demethylation by the demethylation complex erg25-erg26-erg27. The chain is Sterol 24-C-methyltransferase erg6 from Schizosaccharomyces pombe (strain 972 / ATCC 24843) (Fission yeast).